The chain runs to 115 residues: Transcriptional regulator protein FixT (115 aa).

Interacts directly with FixL.

Its function is as follows. Prevents transcription of the intermediate key regulatory genes nifA and fixK by counteracting the activity of the FixLJ two-component system. Acts as an inhibitor of the sensor hemoprotein kinase fixL, preventing the production or the accumulation of its phosphorylated form. This is Transcriptional regulator protein FixT (fixT) from Rhizobium meliloti (strain 1021) (Ensifer meliloti).